The chain runs to 359 residues: Chaperone protein DnaJ (359 aa).

The 66-residue stretch at 3 to 68 folds into the J domain; that stretch reads DYYEILGVPK…ERRQTYDRYG (66 aa). The CR-type zinc-finger motif lies at 128 to 205; sequence GVSKDIKYKI…CAGKGFIEEQ (78 aa). 8 residues coordinate Zn(2+): cysteine 141, cysteine 144, cysteine 157, cysteine 160, cysteine 179, cysteine 182, cysteine 193, and cysteine 196. CXXCXGXG motif repeat units lie at residues 141 to 148, 157 to 164, 179 to 186, and 193 to 200; these read CKTCDGTG, CPYCGGSG, CPFCKGSG, and CHDCAGKG.

The protein belongs to the DnaJ family. In terms of assembly, homodimer. Zn(2+) is required as a cofactor.

It is found in the cytoplasm. Participates actively in the response to hyperosmotic and heat shock by preventing the aggregation of stress-denatured proteins and by disaggregating proteins, also in an autonomous, DnaK-independent fashion. Unfolded proteins bind initially to DnaJ; upon interaction with the DnaJ-bound protein, DnaK hydrolyzes its bound ATP, resulting in the formation of a stable complex. GrpE releases ADP from DnaK; ATP binding to DnaK triggers the release of the substrate protein, thus completing the reaction cycle. Several rounds of ATP-dependent interactions between DnaJ, DnaK and GrpE are required for fully efficient folding. Also involved, together with DnaK and GrpE, in the DNA replication of plasmids through activation of initiation proteins. In Campylobacter hominis (strain ATCC BAA-381 / DSM 21671 / CCUG 45161 / LMG 19568 / NCTC 13146 / CH001A), this protein is Chaperone protein DnaJ.